Consider the following 511-residue polypeptide: Histidine ammonia-lyase (511 aa).

The segment at residues 142 to 144 is a cross-link (5-imidazolinone (Ala-Gly)); sequence ASG. Position 143 is a 2,3-didehydroalanine (Ser) (Ser143).

Belongs to the PAL/histidase family. Post-translationally, contains an active site 4-methylidene-imidazol-5-one (MIO), which is formed autocatalytically by cyclization and dehydration of residues Ala-Ser-Gly.

It localises to the cytoplasm. It carries out the reaction L-histidine = trans-urocanate + NH4(+). Its pathway is amino-acid degradation; L-histidine degradation into L-glutamate; N-formimidoyl-L-glutamate from L-histidine: step 1/3. The polypeptide is Histidine ammonia-lyase (Brucella suis biovar 1 (strain 1330)).